The chain runs to 263 residues: MKNAFKDALKAGRPQIGLWLGLANSYSAELLAGAGFDWLLIDGEHAPNNVQTVLTQLQAIASYPSQPVVRPSWNDPVQIKQLLDVGAQTLLIPMVQNADEARNAVAATRYPPAGIRGVGSALARASRWNRIPDYLHQANDAMCVLVQIETREAMSNLASILDVDGIDGVFIGPADLSADMGFAGNPQHPEVQAAIENAIVQIRAAGKAPGILMANEALAKRYLELGALFVAVGVDTTLLARGAEALAARFGAEKNLSGASGVY.

H45 functions as the Proton acceptor in the catalytic mechanism. Residue Q147 coordinates substrate. Residue E149 coordinates a divalent metal cation. Substrate is bound by residues A174 and D175. D175 is a binding site for a divalent metal cation.

The protein belongs to the HpcH/HpaI aldolase family. In terms of assembly, homohexamer; trimer of dimers. Requires a divalent metal cation as cofactor.

It catalyses the reaction 4-hydroxy-2-oxoheptanedioate = succinate semialdehyde + pyruvate. The protein operates within aromatic compound metabolism; 4-hydroxyphenylacetate degradation; pyruvate and succinate semialdehyde from 4-hydroxyphenylacetate: step 7/7. Catalyzes the reversible retro-aldol cleavage of 4-hydroxy-2-ketoheptane-1,7-dioate (HKHD) to pyruvate and succinic semialdehyde. The chain is 4-hydroxy-2-oxo-heptane-1,7-dioate aldolase from Salmonella dublin (strain CT_02021853).